Here is a 585-residue protein sequence, read N- to C-terminus: Serine protease HtrA-like (585 aa).

The interval 1–184 (MDNNKKQVIP…QPKDKDNDNT (184 aa)) is disordered. The segment covering 21-82 (YFHNVEREER…IHQQRDDKSY (62 aa)) has biased composition (basic and acidic residues). Polar residues predominate over residues 84–94 (QKTLNQNNQMN). The segment covering 95-113 (KSKDDDNKIGEESLHDVRV) has biased composition (basic and acidic residues). The segment covering 114 to 124 (SSDTSTLPHQN) has biased composition (polar residues). The span at 126–139 (SIKDYDDSGNESKQ) shows a compositional bias: basic and acidic residues. The span at 151 to 175 (GVNSNHTEQDSRSTQPYSSKHSYSQ) shows a compositional bias: polar residues. The helical transmembrane segment at 224-244 (MLIIIGIIVLLLILNAIFTTV) threads the bilayer. Residues histidine 320, aspartate 350, and serine 435 each act as charge relay system in the active site. In terms of domain architecture, PDZ spans 516-575 (GVLIGEVKENGLGDKAGLKKGDVIVELDGKKIEDNLRYRQVIYSHYDDQKTITAKIYRNG).

Belongs to the peptidase S1C family.

The protein localises to the cell membrane. This chain is Serine protease HtrA-like, found in Staphylococcus epidermidis (strain ATCC 35984 / DSM 28319 / BCRC 17069 / CCUG 31568 / BM 3577 / RP62A).